A 323-amino-acid chain; its full sequence is Beta-ketoacyl-[acyl-carrier-protein] synthase III (323 aa).

Residues Cys-113 and His-250 contribute to the active site. Residues 251–255 (QANLR) are ACP-binding. Residue Asn-280 is part of the active site.

Belongs to the thiolase-like superfamily. FabH family. Homodimer.

Its subcellular location is the cytoplasm. It catalyses the reaction malonyl-[ACP] + acetyl-CoA + H(+) = 3-oxobutanoyl-[ACP] + CO2 + CoA. It participates in lipid metabolism; fatty acid biosynthesis. In terms of biological role, catalyzes the condensation reaction of fatty acid synthesis by the addition to an acyl acceptor of two carbons from malonyl-ACP. Catalyzes the first condensation reaction which initiates fatty acid synthesis and may therefore play a role in governing the total rate of fatty acid production. Possesses both acetoacetyl-ACP synthase and acetyl transacylase activities. Its substrate specificity determines the biosynthesis of branched-chain and/or straight-chain of fatty acids. In Paracoccus denitrificans (strain Pd 1222), this protein is Beta-ketoacyl-[acyl-carrier-protein] synthase III.